The following is a 188-amino-acid chain: Grand meiotic recombination cluster protein 2 (188 aa).

Polar residues-rich tracts occupy residues 1 to 13 (MSDTTEVPRQSSE) and 21 to 31 (ERTNSLKSPDV). Positions 1-31 (MSDTTEVPRQSSENDQDNNLERTNSLKSPDV) are disordered.

Its function is as follows. Probable transcriptional activator involved in meiotic prophase and synaptonemal complex (SC) assembly. In Saccharomyces cerevisiae (strain ATCC 204508 / S288c) (Baker's yeast), this protein is Grand meiotic recombination cluster protein 2 (GMC2).